We begin with the raw amino-acid sequence, 290 residues long: Eukaryotic translation initiation factor 3 subunit F-2 (290 aa).

The MPN domain maps to 12-150 (VRLQPLVLFQ…TRLYCAVTMG (139 aa)).

This sequence belongs to the eIF-3 subunit F family. In terms of assembly, component of the eukaryotic translation initiation factor 3 (eIF-3) complex. The eIF-3 complex interacts with pix.

It localises to the cytoplasm. In terms of biological role, component of the eukaryotic translation initiation factor 3 (eIF-3) complex, which is involved in protein synthesis of a specialized repertoire of mRNAs and, together with other initiation factors, stimulates binding of mRNA and methionyl-tRNAi to the 40S ribosome. The eIF-3 complex specifically targets and initiates translation of a subset of mRNAs involved in cell proliferation. This is Eukaryotic translation initiation factor 3 subunit F-2 from Drosophila mojavensis (Fruit fly).